Consider the following 424-residue polypeptide: Folate-like transporter 2 (424 aa).

N35 is a glycosylation site (N-linked (GlcNAc...) asparagine). 6 consecutive transmembrane segments (helical) span residues 48–68 (IWTY…DVFL), 71–91 (PLLV…VFGK), 99–119 (LEVF…YIYV), 136–156 (ALLV…GLNW), 164–184 (IISL…PGVE), and 233–253 (PLIL…YQVT). N-linked (GlcNAc...) asparagine glycosylation occurs at N254. 4 helical membrane passes run 299-319 (WGDL…FWMS), 324-344 (IVVL…TTTI), 361-381 (LFGI…AVVI), and 392-412 (FVVY…IFGI).

This sequence belongs to the reduced folate carrier (RFC) transporter (TC 2.A.48) family.

The protein resides in the membrane. Its function is as follows. Unlike folt-1, does not appear to act as a folate transporter. The sequence is that of Folate-like transporter 2 (folt-2) from Caenorhabditis elegans.